Consider the following 46-residue polypeptide: Protein PsbN (46 aa).

Residues 7–27 form a helical membrane-spanning segment; it reads ALSVAIGVLAVLFGLTGFGVY.

Belongs to the PsbN family.

Its subcellular location is the cellular thylakoid membrane. May play a role in photosystem I and II biogenesis. The protein is Protein PsbN of Synechococcus sp. (strain CC9605).